We begin with the raw amino-acid sequence, 231 residues long: Urease accessory protein UreF (231 aa).

The protein belongs to the UreF family. As to quaternary structure, ureD, UreF and UreG form a complex that acts as a GTP-hydrolysis-dependent molecular chaperone, activating the urease apoprotein by helping to assemble the nickel containing metallocenter of UreC. The UreE protein probably delivers the nickel.

It is found in the cytoplasm. Its function is as follows. Required for maturation of urease via the functional incorporation of the urease nickel metallocenter. The sequence is that of Urease accessory protein UreF from Marinobacter nauticus (strain ATCC 700491 / DSM 11845 / VT8) (Marinobacter aquaeolei).